An 88-amino-acid polypeptide reads, in one-letter code: Small ribosomal subunit protein eS21 (88 aa).

Belongs to the eukaryotic ribosomal protein eS21 family. As to quaternary structure, component of the small ribosomal subunit. Mature ribosomes consist of a small (40S) and a large (60S) subunit. The 40S subunit contains about 33 different proteins and 1 molecule of RNA (18S). The 60S subunit contains about 49 different proteins and 3 molecules of RNA (25S, 5.8S and 5S).

The protein resides in the cytoplasm. Functionally, required for the processing of the 20S rRNA-precursor to mature 18S rRNA in a late step of the maturation of 40S ribosomal subunits. Has a physiological role leading to 18S rRNA stability. The polypeptide is Small ribosomal subunit protein eS21 (rps21) (Aspergillus fumigatus (strain ATCC MYA-4609 / CBS 101355 / FGSC A1100 / Af293) (Neosartorya fumigata)).